The chain runs to 735 residues: Phosphoribosylformylglycinamidine synthase subunit PurL (735 aa).

Residue H49 is part of the active site. 2 residues coordinate ATP: Y52 and K91. Position 93 (E93) interacts with Mg(2+). Substrate is bound by residues 94-97 (SHNH) and R116. The Proton acceptor role is filled by H95. Position 117 (D117) interacts with Mg(2+). Q240 provides a ligand contact to substrate. D268 contacts Mg(2+). A substrate-binding site is contributed by 312 to 314 (ESQ). ATP-binding residues include D493 and G530. N531 is a Mg(2+) binding site. S533 lines the substrate pocket.

The protein belongs to the FGAMS family. In terms of assembly, monomer. Part of the FGAM synthase complex composed of 1 PurL, 1 PurQ and 2 PurS subunits.

The protein localises to the cytoplasm. It carries out the reaction N(2)-formyl-N(1)-(5-phospho-beta-D-ribosyl)glycinamide + L-glutamine + ATP + H2O = 2-formamido-N(1)-(5-O-phospho-beta-D-ribosyl)acetamidine + L-glutamate + ADP + phosphate + H(+). Its pathway is purine metabolism; IMP biosynthesis via de novo pathway; 5-amino-1-(5-phospho-D-ribosyl)imidazole from N(2)-formyl-N(1)-(5-phospho-D-ribosyl)glycinamide: step 1/2. Its function is as follows. Part of the phosphoribosylformylglycinamidine synthase complex involved in the purines biosynthetic pathway. Catalyzes the ATP-dependent conversion of formylglycinamide ribonucleotide (FGAR) and glutamine to yield formylglycinamidine ribonucleotide (FGAM) and glutamate. The FGAM synthase complex is composed of three subunits. PurQ produces an ammonia molecule by converting glutamine to glutamate. PurL transfers the ammonia molecule to FGAR to form FGAM in an ATP-dependent manner. PurS interacts with PurQ and PurL and is thought to assist in the transfer of the ammonia molecule from PurQ to PurL. The chain is Phosphoribosylformylglycinamidine synthase subunit PurL from Azorhizobium caulinodans (strain ATCC 43989 / DSM 5975 / JCM 20966 / LMG 6465 / NBRC 14845 / NCIMB 13405 / ORS 571).